The following is a 384-amino-acid chain: Dual-specificity RNA methyltransferase RlmN (384 aa).

Glutamate 93 functions as the Proton acceptor in the catalytic mechanism. The 241-residue stretch at 99-339 (EETRGTLCVS…TTIRKTRGDD (241 aa)) folds into the Radical SAM core domain. A disulfide bond links cysteine 106 and cysteine 344. [4Fe-4S] cluster-binding residues include cysteine 113, cysteine 117, and cysteine 120. Residues 170-171 (GE), serine 202, 224-226 (SLH), and asparagine 301 contribute to the S-adenosyl-L-methionine site. The active-site S-methylcysteine intermediate is the cysteine 344.

Belongs to the radical SAM superfamily. RlmN family. Requires [4Fe-4S] cluster as cofactor.

It is found in the cytoplasm. It catalyses the reaction adenosine(2503) in 23S rRNA + 2 reduced [2Fe-2S]-[ferredoxin] + 2 S-adenosyl-L-methionine = 2-methyladenosine(2503) in 23S rRNA + 5'-deoxyadenosine + L-methionine + 2 oxidized [2Fe-2S]-[ferredoxin] + S-adenosyl-L-homocysteine. The catalysed reaction is adenosine(37) in tRNA + 2 reduced [2Fe-2S]-[ferredoxin] + 2 S-adenosyl-L-methionine = 2-methyladenosine(37) in tRNA + 5'-deoxyadenosine + L-methionine + 2 oxidized [2Fe-2S]-[ferredoxin] + S-adenosyl-L-homocysteine. Its function is as follows. Specifically methylates position 2 of adenine 2503 in 23S rRNA and position 2 of adenine 37 in tRNAs. m2A2503 modification seems to play a crucial role in the proofreading step occurring at the peptidyl transferase center and thus would serve to optimize ribosomal fidelity. This Cupriavidus pinatubonensis (strain JMP 134 / LMG 1197) (Cupriavidus necator (strain JMP 134)) protein is Dual-specificity RNA methyltransferase RlmN.